The sequence spans 306 residues: Ribonuclease H2 subunit B (306 aa).

A disordered region spans residues 232–285 (LPDLSSPTPEPPVKKRKVSEAPVEAEEDYTKFNSDSKNKKSNSKMTAAQKSLAK). The span at 259-269 (DYTKFNSDSKN) shows a compositional bias: basic and acidic residues.

Belongs to the RNase H2 subunit B family. In terms of assembly, the RNase H2 complex is a heterotrimer composed of the catalytic subunit rnaseh2a and the non-catalytic subunits rnaseh2b and rnaseh2c.

The protein resides in the nucleus. Its function is as follows. Non catalytic subunit of RNase H2, an endonuclease that specifically degrades the RNA of RNA:DNA hybrids. Participates in DNA replication, possibly by mediating the removal of lagging-strand Okazaki fragment RNA primers during DNA replication. Mediates the excision of single ribonucleotides from DNA:RNA duplexes. The protein is Ribonuclease H2 subunit B (rnaseh2b) of Xenopus tropicalis (Western clawed frog).